The following is a 308-amino-acid chain: Putative S-adenosyl-L-methionine-dependent methyltransferase Mb3816c (308 aa).

Residues Asp131 and 160–161 (DL) contribute to the S-adenosyl-L-methionine site.

Belongs to the UPF0677 family.

Exhibits S-adenosyl-L-methionine-dependent methyltransferase activity. The chain is Putative S-adenosyl-L-methionine-dependent methyltransferase Mb3816c from Mycobacterium bovis (strain ATCC BAA-935 / AF2122/97).